Reading from the N-terminus, the 206-residue chain is Dephospho-CoA kinase (206 aa).

A DPCK domain is found at 4-204 (IVGLTGGIGS…QFYLQQAENK (201 aa)). 12–17 (GSGKTT) contacts ATP.

It belongs to the CoaE family.

The protein localises to the cytoplasm. It catalyses the reaction 3'-dephospho-CoA + ATP = ADP + CoA + H(+). It participates in cofactor biosynthesis; coenzyme A biosynthesis; CoA from (R)-pantothenate: step 5/5. Catalyzes the phosphorylation of the 3'-hydroxyl group of dephosphocoenzyme A to form coenzyme A. The sequence is that of Dephospho-CoA kinase from Haemophilus influenzae (strain 86-028NP).